The chain runs to 425 residues: MTVIIFLSVLLGTIILGVPVAFALLICGIALMLHLDFFNAQILAQQLVSGADSFSLMAIPFFILAGEIMNEGGLSKRIIDLPMKLVGHKRGGLGFVAILSAMIMASLSGSAVADTAAVAAMLLPMMKTTGYPIHRSAGLIGTAGIIAPIIPPSIPFIVFGVASGVSITKLFLAGIFPGVIMGCCLAILWRWQAKRLNLMTFSKATKQDLCFSFKNSVWALMLPVIIIGGFRSGIFTPTEAGVVATFYALIVSLFIYHELPLKHLPKVLLAAAKTTAVVMFLVASANVTGYLITVAELPTMLTILLEPLIENPTILLLVIMLAVFVIGMVMDLTPTVLILTPVLMPLVEEAGIDPVYFGVLFILNTSIGLITPPVGNVLNVITGVSKLPFDQAAKGIMPYLGMMIMLLLTFIFIPELILMPLQWIQ.

A run of 13 helical transmembrane segments spans residues 3–23 (VIIF…VAFA), 24–44 (LLIC…QILA), 54–74 (FSLM…EGGL), 93–113 (LGFV…SAVA), 139–159 (LIGT…FIVF), 169–189 (KLFL…AILW), 217–237 (VWAL…IFTP), 241–261 (GVVA…ELPL), 275–295 (TAVV…ITVA), 312–332 (PTIL…VMDL), 334–354 (PTVL…GIDP), 355–375 (VYFG…PPVG), and 399–419 (YLGM…LILM).

The protein belongs to the TRAP transporter large permease family.

Its subcellular location is the cell inner membrane. The chain is Putative TRAP transporter large permease protein HI_1029 from Haemophilus influenzae (strain ATCC 51907 / DSM 11121 / KW20 / Rd).